Reading from the N-terminus, the 486-residue chain is H2.0-like homeobox protein (486 aa).

Disordered regions lie at residues 83–173 and 330–486; these read ASFQ…SSKD and KWRH…LGGL. Positions 125-135 are enriched in low complexity; sequence QQQQQQQQPQQ. Residues 276–335 constitute a DNA-binding region (homeobox); sequence RSWSRAVFSNLQRKGLEKRFEIQKYVTKPDRKQLAAMLGLTDAQVKVWFQNRRMKWRHSK. Composition is skewed to basic and acidic residues over residues 334-349 and 363-372; these read SKEA…EAGE and EERSPSRSEG. The segment covering 373–383 has biased composition (acidic residues); it reads EAESESSDPES. A compositionally biased stretch (basic and acidic residues) spans 390–401; it reads DTERTEGTERSL. Low complexity predominate over residues 409–420; that stretch reads ASAAGALLAASS. Over residues 421 to 440 the composition is skewed to gly residues; that stretch reads GGSGGSGGGGGGGFNFGGLS. A compositionally biased stretch (low complexity) spans 441 to 474; the sequence is SGSTTSAGSSGSHSSGGASELLPAPQPSLSSAPK. Residues 475–486 show a composition bias toward pro residues; that stretch reads SPEPVPAPLGGL.

Belongs to the H2.0 homeobox family.

Its subcellular location is the nucleus. Transcription factor required for TBX21/T-bet-dependent maturation of Th1 cells as well as maintenance of Th1-specific gene expression. Involved in embryogenesis and hematopoiesis. The protein is H2.0-like homeobox protein (HLX) of Bos taurus (Bovine).